Consider the following 459-residue polypeptide: VGFKAGVKDYKLTYYTPDYETKDTDILAAFRVTPQPGVPPEEAGAAVAAESSTGTWTTVWTDGLTSLDRYKGRCYHIEPVVGEENQYIAYVAYPLDLFEEGSVTNMFTSIVGNVFGFKALRALRLEDLRIPVAYVKTFQGPPHGIQVERDKLNKYGRPLLGCTIKPKLGLSAKNYGRAVYECLRGGLDFTKDDENVNSQPFMRWRDRFLFCAEAINKAQAETGEIKGHYLNATAGTCEEMMKRAVFARELGVPIVMHDYLTGGFTANTSLAHYCRDNGLLLHIHRAMHAVIDRQKNHGIHFRVLAKALRMSGGDHIHAGTVVGKLEGEREITLGFVDLLRDDFIEKDRSRGIYFTQDWVSLPGVLPVASGGIHVWHMPALTEIFGDDSVLQFGGGTLGHPWGNAPGAVANRVALEACVQARNEGRDLAREGNEIIREACKWSPELAAACEVWKAIKFEF.

Lys4 is modified (N6,N6,N6-trimethyllysine). Substrate is bound by residues Asn113 and Thr163. The active-site Proton acceptor is the Lys165. Residue Lys167 participates in substrate binding. Mg(2+) contacts are provided by Lys191, Asp193, and Glu194. Lys191 bears the N6-carboxylysine mark. His284 (proton acceptor) is an active-site residue. Substrate-binding residues include Arg285, His317, and Ser369.

It belongs to the RuBisCO large chain family. Type I subfamily. In terms of assembly, heterohexadecamer of 8 large chains and 8 small chains; disulfide-linked. The disulfide link is formed within the large subunit homodimers. The cofactor is Mg(2+). The disulfide bond which can form in the large chain dimeric partners within the hexadecamer appears to be associated with oxidative stress and protein turnover.

The protein resides in the plastid. Its subcellular location is the chloroplast. The catalysed reaction is 2 (2R)-3-phosphoglycerate + 2 H(+) = D-ribulose 1,5-bisphosphate + CO2 + H2O. It carries out the reaction D-ribulose 1,5-bisphosphate + O2 = 2-phosphoglycolate + (2R)-3-phosphoglycerate + 2 H(+). Its function is as follows. RuBisCO catalyzes two reactions: the carboxylation of D-ribulose 1,5-bisphosphate, the primary event in carbon dioxide fixation, as well as the oxidative fragmentation of the pentose substrate in the photorespiration process. Both reactions occur simultaneously and in competition at the same active site. In Garrya elliptica (Wavyleaf silktassel), this protein is Ribulose bisphosphate carboxylase large chain.